The sequence spans 466 residues: Cysteine--tRNA ligase (466 aa).

A Zn(2+)-binding site is contributed by C28. The 'HIGH' region motif lies at 30–40; the sequence is PTVYNYIHIGN. C208, H233, and E237 together coordinate Zn(2+). The short motif at 265–269 is the 'KMSKS' region element; the sequence is KMSKS. K268 provides a ligand contact to ATP.

It belongs to the class-I aminoacyl-tRNA synthetase family. Monomer. Zn(2+) serves as cofactor.

It localises to the cytoplasm. It catalyses the reaction tRNA(Cys) + L-cysteine + ATP = L-cysteinyl-tRNA(Cys) + AMP + diphosphate. This is Cysteine--tRNA ligase from Staphylococcus aureus (strain USA300).